We begin with the raw amino-acid sequence, 474 residues long: Glutamate--tRNA ligase (474 aa).

The 'HIGH' region signature appears at 10 to 20 (PSPTGYLHIGG). Residues Cys-107, Cys-109, Cys-134, and Asp-136 each contribute to the Zn(2+) site. Residues 244–248 (RLSKR) carry the 'KMSKS' region motif. ATP is bound at residue Lys-247.

This sequence belongs to the class-I aminoacyl-tRNA synthetase family. Glutamate--tRNA ligase type 1 subfamily. Monomer. Requires Zn(2+) as cofactor.

Its subcellular location is the cytoplasm. It catalyses the reaction tRNA(Glu) + L-glutamate + ATP = L-glutamyl-tRNA(Glu) + AMP + diphosphate. Its function is as follows. Catalyzes the attachment of glutamate to tRNA(Glu) in a two-step reaction: glutamate is first activated by ATP to form Glu-AMP and then transferred to the acceptor end of tRNA(Glu). The sequence is that of Glutamate--tRNA ligase from Anaeromyxobacter dehalogenans (strain 2CP-C).